A 165-amino-acid chain; its full sequence is Serine/threonine-protein phosphatase 2A 56 kDa regulatory subunit epsilon isoform (165 aa).

The interval 1 to 41 (MSSAPTTPPSVDKVDGFSRKSVRKARQKRSQSSSQFRSQGK) is disordered. Ser2 carries the N-acetylserine modification. Phosphothreonine is present on Thr7. Basic residues predominate over residues 20–29 (KSVRKARQKR). Residues Ser30, Ser32, and Ser34 each carry the phosphoserine modification. Positions 30–41 (SQSSSQFRSQGK) are enriched in low complexity.

This sequence belongs to the phosphatase 2A regulatory subunit B56 family. As to quaternary structure, PP2A consists of a common heterodimeric core enzyme, composed of a 36 kDa catalytic subunit (subunit C) and a 65 kDa constant regulatory subunit (PR65 or subunit A), that associates with a variety of regulatory subunits. Proteins that associate with the core dimer include three families of regulatory subunits B (the R2/B/PR55/B55, R3/B''/PR72/PR130/PR59 and R5/B'/B56 families), the 48 kDa variable regulatory subunit, viral proteins, and cell signaling molecules. Interacts with SGO1. Found in a complex with at least ARL2, PPP2CB; PPP2R1A, PPP2R2A, PPP2R5E and TBCD. Highly expressed in testis, lung and brain.

The protein localises to the cytoplasm. Functionally, the B regulatory subunit might modulate substrate selectivity and catalytic activity, and might also direct the localization of the catalytic enzyme to a particular subcellular compartment. The protein is Serine/threonine-protein phosphatase 2A 56 kDa regulatory subunit epsilon isoform (PPP2R5E) of Oryctolagus cuniculus (Rabbit).